The chain runs to 277 residues: Inner kinetochore subunit sim4 (277 aa).

Residues 96 to 138 (NNISDLKKNLHSNKKLEAVLKEELHQIKKFSSDLQSLKSSMGE) are a coiled coil.

This sequence belongs to the CENP-K/MCM22 family. As to quaternary structure, component of the inner kinetochore constitutive centromere-associated network (CCAN) (also known as central kinetochore Sim4 complex in fission yeast), which is composed of at least cnl2, cnp3, cnp20, fta1, fta2, fta3, fta4, fta6, fta7, mal2, mhf1, mhf2, mis6, mis15, mis17, sim4 and wip1. Interacts with mis6 and dad1.

The protein localises to the nucleus. It localises to the chromosome. The protein resides in the centromere. In terms of biological role, component of the kinetochore, a multiprotein complex that assembles on centromeric DNA and attaches chromosomes to spindle microtubules, mediating chromosome segregation and sister chromatid segregation during meiosis and mitosis. Component of the inner kinetochore constitutive centromere-associated network (CCAN), which serves as a structural platform for outer kinetochore assembly. The protein is Inner kinetochore subunit sim4 (sim4) of Schizosaccharomyces pombe (strain 972 / ATCC 24843) (Fission yeast).